Here is a 265-residue protein sequence, read N- to C-terminus: Polyphosphate glucokinase (265 aa).

Residues 1-18 (MTSTGPETSETPGATTQR) show a composition bias toward polar residues. Positions 1–22 (MTSTGPETSETPGATTQRHGFG) are disordered. 24–29 (DVGGSG) contributes to the ATP binding site.

The protein belongs to the ROK (NagC/XylR) family. As to quaternary structure, homodimer.

It carries out the reaction [phosphate](n) + D-glucose = [phosphate](n-1) + D-glucose 6-phosphate + H(+). The enzyme catalyses D-glucose + ATP = D-glucose 6-phosphate + ADP + H(+). Functionally, catalyzes the phosphorylation of glucose using polyphosphate or ATP as the phosphoryl donor. Polyphosphate, rather than ATP, seems to be the major phosphate donor for the enzyme in M.tuberculosis. The protein is Polyphosphate glucokinase (ppgK) of Mycobacterium tuberculosis (strain CDC 1551 / Oshkosh).